Here is a 229-residue protein sequence, read N- to C-terminus: MELLLLSNSTLPGKAWLEHALPLIANQLNGRRSAVFIPFAGVTQTWDEYTDKTAEVLAPLGINVTGIHRVADPLAAIEKAEIIIVGGGNTFQLLKESRERGLLAPMADRVKRGALYIGWSAGANLACPTIRTTNDMPIVDPNGFDALDLFPLQINPHFTNALPEGHKGETREQRIRELLVVAPELTVIGLPEGNWIQVSNGQAVLGGPNTTWVFKAGEEAVALEAGHRF.

Catalysis depends on charge relay system residues serine 120, aspartate 135, and histidine 157.

It belongs to the peptidase S51 family.

It localises to the cytoplasm. The catalysed reaction is Dipeptidase E catalyzes the hydrolysis of dipeptides Asp-|-Xaa. It does not act on peptides with N-terminal Glu, Asn or Gln, nor does it cleave isoaspartyl peptides.. In terms of biological role, hydrolyzes dipeptides containing N-terminal aspartate residues. May play a role in allowing the cell to use peptide aspartate to spare carbon otherwise required for the synthesis of the aspartate family of amino acids. The protein is Peptidase E of Salmonella schwarzengrund (strain CVM19633).